A 619-amino-acid polypeptide reads, in one-letter code: Nucleolar GTP-binding protein 2 (619 aa).

A compositionally biased stretch (basic and acidic residues) spans 1-10 (MGTGKKEKSR). Positions 1–24 (MGTGKKEKSRIQRQGKVTGDPKVK) are disordered. The 162-residue stretch at 222–383 (WNELYKVIDS…LIDCPGIVPP (162 aa)) folds into the CP-type G domain. GTP contacts are provided by residues 332 to 339 (GYPNVGKS) and 376 to 380 (DCPGI). The tract at residues 473–619 (PWFTPAPEKE…PPKKQRRSRK (147 aa)) is disordered. Residues 489–500 (MEGREGRYGEMS) are compositionally biased toward basic and acidic residues. Acidic residues predominate over residues 536 to 546 (SDSDSEVEEAA). Over residues 547–556 (EEKGEEKSTA) the composition is skewed to basic and acidic residues. Over residues 565–603 (SSDEEEDGEEEGSDVEDDEEGSDLDIEGASELEESESEA) the composition is skewed to acidic residues.

It belongs to the TRAFAC class YlqF/YawG GTPase family. NOG2 subfamily.

Its subcellular location is the nucleus. The protein resides in the nucleolus. GTPase that associates with pre-60S ribosomal subunits in the nucleolus and is required for their nuclear export and maturation. This chain is Nucleolar GTP-binding protein 2 (nog-2), found in Neurospora crassa (strain ATCC 24698 / 74-OR23-1A / CBS 708.71 / DSM 1257 / FGSC 987).